We begin with the raw amino-acid sequence, 124 residues long: UPF0231 protein Sama_0645 (124 aa).

Belongs to the UPF0231 family.

The protein is UPF0231 protein Sama_0645 of Shewanella amazonensis (strain ATCC BAA-1098 / SB2B).